The primary structure comprises 188 residues: dCTP deaminase (188 aa).

Position 107-112 (107-112) interacts with dCTP; it reads KSTYAR. Glu133 (proton donor/acceptor) is an active-site residue. Residues Gln152, Tyr166, and Gln176 each coordinate dCTP.

The protein belongs to the dCTP deaminase family. As to quaternary structure, homotrimer.

It catalyses the reaction dCTP + H2O + H(+) = dUTP + NH4(+). The protein operates within pyrimidine metabolism; dUMP biosynthesis; dUMP from dCTP (dUTP route): step 1/2. Its function is as follows. Catalyzes the deamination of dCTP to dUTP. The sequence is that of dCTP deaminase from Sulfurovum sp. (strain NBC37-1).